Reading from the N-terminus, the 204-residue chain is Methyl-CpG-binding domain protein 3-like 2B (204 aa).

Residues 126–137 (SLDRAGAERVRS) show a composition bias toward basic and acidic residues. The tract at residues 126–145 (SLDRAGAERVRSPLEPTPGR) is disordered.

The protein belongs to the MBD3L family.

This chain is Methyl-CpG-binding domain protein 3-like 2B, found in Homo sapiens (Human).